We begin with the raw amino-acid sequence, 267 residues long: Trehalose 2-sulfotransferase (267 aa).

Residues Q14, 33-39, P48, and W53 each bind alpha,alpha-trehalose; that span reads EPQEFFQ. E36 serves as the catalytic Proton acceptor.

Belongs to the Stf0 sulfotransferase family. Homodimer.

It carries out the reaction alpha,alpha-trehalose + 3'-phosphoadenylyl sulfate = 2-O-sulfo-alpha,alpha-trehalose + adenosine 3',5'-bisphosphate + H(+). The protein operates within glycolipid metabolism. Catalyzes the sulfuryl group transfer from 3'-phosphoadenosine-5'-phosphosulfate (PAPS) to trehalose, leading to trehalose-2-sulfate (T2S). The sulfation of trehalose is the first step in the biosynthesis of sulfolipid-1 (SL-1), a major cell wall glycolipid in pathogenic mycobacteria. Cannot use free glucose and unnatural stereoisomers of trehalose (alpha,beta (neo-trehalose) and beta,beta (iso-trehalose)) as substrates. The protein is Trehalose 2-sulfotransferase of Mycolicibacterium smegmatis (strain ATCC 700084 / mc(2)155) (Mycobacterium smegmatis).